Here is a 201-residue protein sequence, read N- to C-terminus: FMN-dependent NADH:quinone oxidoreductase (201 aa).

FMN-binding positions include serine 10, 16–18 (SQS), 96–99 (MYNF), and 140–143 (SRGG).

The protein belongs to the azoreductase type 1 family. As to quaternary structure, homodimer. FMN is required as a cofactor.

The enzyme catalyses 2 a quinone + NADH + H(+) = 2 a 1,4-benzosemiquinone + NAD(+). It catalyses the reaction N,N-dimethyl-1,4-phenylenediamine + anthranilate + 2 NAD(+) = 2-(4-dimethylaminophenyl)diazenylbenzoate + 2 NADH + 2 H(+). Its function is as follows. Quinone reductase that provides resistance to thiol-specific stress caused by electrophilic quinones. Also exhibits azoreductase activity. Catalyzes the reductive cleavage of the azo bond in aromatic azo compounds to the corresponding amines. In Citrobacter koseri (strain ATCC BAA-895 / CDC 4225-83 / SGSC4696), this protein is FMN-dependent NADH:quinone oxidoreductase.